Here is a 368-residue protein sequence, read N- to C-terminus: Peptide chain release factor 2 (368 aa).

Glutamine 250 is subject to N5-methylglutamine.

Belongs to the prokaryotic/mitochondrial release factor family. Post-translationally, methylated by PrmC. Methylation increases the termination efficiency of RF2.

It localises to the cytoplasm. Its function is as follows. Peptide chain release factor 2 directs the termination of translation in response to the peptide chain termination codons UGA and UAA. This Rickettsia africae (strain ESF-5) protein is Peptide chain release factor 2.